Here is a 705-residue protein sequence, read N- to C-terminus: Polyribonucleotide nucleotidyltransferase (705 aa).

Residues aspartate 486 and aspartate 492 each contribute to the Mg(2+) site. One can recognise a KH domain in the interval 553 to 612 (PRIHTMKVSQDKIRDIIGKGGATIRQLTEETGTTIEIEDDGTVKIAATSGEQAEDAINRI). The S1 motif domain occupies 622–690 (GTLYTGKVVR…RQGRVRLSIK (69 aa)).

It belongs to the polyribonucleotide nucleotidyltransferase family. As to quaternary structure, component of the RNA degradosome, which is a multiprotein complex involved in RNA processing and mRNA degradation. Mg(2+) is required as a cofactor.

It localises to the cytoplasm. It catalyses the reaction RNA(n+1) + phosphate = RNA(n) + a ribonucleoside 5'-diphosphate. Involved in mRNA degradation. Catalyzes the phosphorolysis of single-stranded polyribonucleotides processively in the 3'- to 5'-direction. The sequence is that of Polyribonucleotide nucleotidyltransferase from Colwellia psychrerythraea (strain 34H / ATCC BAA-681) (Vibrio psychroerythus).